A 179-amino-acid chain; its full sequence is UPF0227 protein VP0969 (179 aa).

Belongs to the UPF0227 family.

This chain is UPF0227 protein VP0969, found in Vibrio parahaemolyticus serotype O3:K6 (strain RIMD 2210633).